A 340-amino-acid chain; its full sequence is Ribonucleoside-diphosphate reductase small subunit (340 aa).

The Fe cation site is built by D94, E124, and H127. Y131 is an active-site residue. Residues 180–200 (FILMILIEGIFFAASFAAIAY) traverse the membrane as a helical segment. Fe cation-binding residues include E187, E221, and H224.

The protein belongs to the ribonucleoside diphosphate reductase small chain family. Heterotetramer composed of a homodimer of the large subunit (R1) and a homodimer of the small subunit (R2). Larger multisubunit protein complex are also active, composed of (R1)n(R2)n. Requires Fe cation as cofactor.

The protein localises to the host membrane. The enzyme catalyses a 2'-deoxyribonucleoside 5'-diphosphate + [thioredoxin]-disulfide + H2O = a ribonucleoside 5'-diphosphate + [thioredoxin]-dithiol. Functionally, ribonucleoside-diphosphate reductase holoenzyme provides the precursors necessary for viral DNA synthesis. Allows virus growth in non-dividing cells, as well as reactivation from latency in infected hosts. Catalyzes the biosynthesis of deoxyribonucleotides from the corresponding ribonucleotides. The protein is Ribonucleoside-diphosphate reductase small subunit of Human herpesvirus 1 (strain KOS) (HHV-1).